We begin with the raw amino-acid sequence, 118 residues long: MRSAKLKFEKRKSRIRYKISKTSNRMRLSIFKSCRHIYAQIIDDSKSITIAAASTLDKKIKKIKKSHCNIENAIKVGKEIAKKADSAGIKEVVFDRGGYKYHGIIKALADAAREKIKF.

This sequence belongs to the universal ribosomal protein uL18 family. Part of the 50S ribosomal subunit; part of the 5S rRNA/L5/L18/L25 subcomplex. Contacts the 5S and 23S rRNAs.

In terms of biological role, this is one of the proteins that bind and probably mediate the attachment of the 5S RNA into the large ribosomal subunit, where it forms part of the central protuberance. This Rickettsia prowazekii (strain Madrid E) protein is Large ribosomal subunit protein uL18.